The sequence spans 262 residues: Phosphonates import ATP-binding protein PhnC (262 aa).

The ABC transporter domain occupies 5-253 (IRVEKLAKTF…RFDHLYRSIN (249 aa)). 37 to 44 (GPSGSGKS) contacts ATP.

It belongs to the ABC transporter superfamily. Phosphonates importer (TC 3.A.1.9.1) family. As to quaternary structure, the complex is composed of two ATP-binding proteins (PhnC), two transmembrane proteins (PhnE) and a solute-binding protein (PhnD).

Its subcellular location is the cell inner membrane. The enzyme catalyses phosphonate(out) + ATP + H2O = phosphonate(in) + ADP + phosphate + H(+). Functionally, part of the ABC transporter complex PhnCDE involved in phosphonates, phosphate esters, phosphite and phosphate import. Responsible for energy coupling to the transport system. The polypeptide is Phosphonates import ATP-binding protein PhnC (Escherichia coli (strain K12)).